Consider the following 240-residue polypeptide: UDP-2,3-diacylglucosamine hydrolase (240 aa).

Mn(2+) contacts are provided by D8, H10, D41, N79, and H114. 79 to 80 (NR) lines the substrate pocket. Residues D122, S160, N164, K167, and H195 each contribute to the substrate site. Mn(2+)-binding residues include H195 and H197.

Belongs to the LpxH family. Mn(2+) is required as a cofactor.

It localises to the cell inner membrane. It carries out the reaction UDP-2-N,3-O-bis[(3R)-3-hydroxytetradecanoyl]-alpha-D-glucosamine + H2O = 2-N,3-O-bis[(3R)-3-hydroxytetradecanoyl]-alpha-D-glucosaminyl 1-phosphate + UMP + 2 H(+). The protein operates within glycolipid biosynthesis; lipid IV(A) biosynthesis; lipid IV(A) from (3R)-3-hydroxytetradecanoyl-[acyl-carrier-protein] and UDP-N-acetyl-alpha-D-glucosamine: step 4/6. Its function is as follows. Hydrolyzes the pyrophosphate bond of UDP-2,3-diacylglucosamine to yield 2,3-diacylglucosamine 1-phosphate (lipid X) and UMP by catalyzing the attack of water at the alpha-P atom. Involved in the biosynthesis of lipid A, a phosphorylated glycolipid that anchors the lipopolysaccharide to the outer membrane of the cell. The chain is UDP-2,3-diacylglucosamine hydrolase from Salmonella typhi.